We begin with the raw amino-acid sequence, 208 residues long: N-(5'-phosphoribosyl)anthranilate isomerase (208 aa).

It belongs to the TrpF family.

It catalyses the reaction N-(5-phospho-beta-D-ribosyl)anthranilate = 1-(2-carboxyphenylamino)-1-deoxy-D-ribulose 5-phosphate. It functions in the pathway amino-acid biosynthesis; L-tryptophan biosynthesis; L-tryptophan from chorismate: step 3/5. The chain is N-(5'-phosphoribosyl)anthranilate isomerase from Neisseria meningitidis serogroup A / serotype 4A (strain DSM 15465 / Z2491).